Consider the following 133-residue polypeptide: Succinate dehydrogenase assembly factor 3, mitochondrial (133 aa).

A mitochondrion-targeting transit peptide spans 1 to 12 (MNNKLIYRSVRF).

It belongs to the complex I LYR family. SDHAF3 subfamily. In terms of assembly, interacts with SDH2 within an SDH1-SDH2 subcomplex.

It localises to the mitochondrion. The protein resides in the mitochondrion intermembrane space. Its subcellular location is the mitochondrion matrix. In terms of biological role, plays an essential role in the assembly of succinate dehydrogenase (SDH), an enzyme complex (also referred to as respiratory complex II) that is a component of both the tricarboxylic acid (TCA) cycle and the mitochondrial electron transport chain, and which couples the oxidation of succinate to fumarate with the reduction of ubiquinone (coenzyme Q) to ubiquinol. Promotes maturation of the iron-sulfur protein subunit SDH2 of the SDH catalytic dimer, protecting it from the deleterious effects of oxidants. Acts together with SDHAF1 (SDH6). This is Succinate dehydrogenase assembly factor 3, mitochondrial from Saccharomyces cerevisiae (strain ATCC 204508 / S288c) (Baker's yeast).